A 154-amino-acid chain; its full sequence is Fluoride-specific ion channel FluC 1 (154 aa).

The next 4 helical transmembrane spans lie at 28–48 (VVAV…AASL), 59–79 (WTTF…MVVI), 91–111 (PFFG…AVDS), and 124–144 (LAYL…AAWA). Residues G99 and T102 each coordinate Na(+).

The protein belongs to the fluoride channel Fluc/FEX (TC 1.A.43) family.

Its subcellular location is the cell membrane. The catalysed reaction is fluoride(in) = fluoride(out). Its activity is regulated as follows. Na(+) is not transported, but it plays an essential structural role and its presence is essential for fluoride channel function. Its function is as follows. Fluoride-specific ion channel. Important for reducing fluoride concentration in the cell, thus reducing its toxicity. The polypeptide is Fluoride-specific ion channel FluC 1 (Streptomyces coelicolor (strain ATCC BAA-471 / A3(2) / M145)).